The primary structure comprises 524 residues: Probable beta-1,4-xylosyltransferase IRX14 (524 aa).

The Cytoplasmic portion of the chain corresponds to 1-51 (MMKSLLPQSQLRRSAAAASAARSSGGGAGSGGADGAGSDGGAGGRAPATST). The interval 21–41 (ARSSGGGAGSGGADGAGSDGG) is disordered. Residues 24 to 41 (SGGGAGSGGADGAGSDGG) are compositionally biased toward gly residues. Residues 52–71 (FWFLLHALCCLVSLFLGFRF) traverse the membrane as a helical; Signal-anchor for type II membrane protein segment. At 72–524 (SRLLFFLLFS…SRSTTKRKEN (453 aa)) the chain is on the lumenal side. N-linked (GlcNAc...) asparagine glycans are attached at residues Asn132, Asn135, Asn240, and Asn353. Residues 492 to 524 (AELVDSKQDQEGRRLSRTDRSSRSRSTTKRKEN) are disordered. Over residues 495–513 (VDSKQDQEGRRLSRTDRSS) the composition is skewed to basic and acidic residues.

This sequence belongs to the glycosyltransferase 43 family.

It is found in the golgi apparatus membrane. Its function is as follows. Probable beta-1,4-xylosyltransferase involved in xylan biosynthesis in cell walls. The chain is Probable beta-1,4-xylosyltransferase IRX14 from Oryza sativa subsp. japonica (Rice).